Consider the following 356-residue polypeptide: MLGKTVLLPLLVLLCHSLASASLVYRGADISSLLIEEKAGIEYKNVNGQTQPLENILKANGVNSVRQRVWVNPSDGSYNLDYNVKLAKRVKAAGMSVYLDLHFSDTWADPSHQTTPRGWSTNDIGTLTWQVYNYTMEVCNTFASNGIDVSIVAIGNEIRNGLLWPLGKPDNYANIANILHSAAFGVKDSTLSPKPKIMIHLDNGWDWSAQKFFYNRVLSSGANLVKSDFDLIGVSYYPFYNPSATLSALTTSLKNLRSTYGKDVLVVETDWPVSCPNPAYAFPSDLKDIPFSVAGQTTFVQRVANIVAQTPGGIGLYYWEPAWVQNAALGSSCADNLMVDWSTRQARTSLSVFATI.

Positions M1–A21 are cleaved as a signal peptide. N-linked (GlcNAc...) asparagine glycosylation occurs at N133. The active-site Proton donor is E157. E268 functions as the Nucleophile in the catalytic mechanism.

This sequence belongs to the glycosyl hydrolase 53 family.

It is found in the secreted. It carries out the reaction The enzyme specifically hydrolyzes (1-&gt;4)-beta-D-galactosidic linkages in type I arabinogalactans.. In terms of biological role, endogalactanase involved in the degradation of plant cell wall polysaccharides, and more particularly of hairy regions of pectin. This Aspergillus fumigatus (strain ATCC MYA-4609 / CBS 101355 / FGSC A1100 / Af293) (Neosartorya fumigata) protein is Probable arabinogalactan endo-beta-1,4-galactanase A (galA).